The following is a 176-amino-acid chain: Parathyroid hormone-related protein (176 aa).

Positions 1-25 (MMFTKLFQQWSFAVFLLSYSVPSYG) are cleaved as a signal peptide. A propeptide spanning residues 26–37 (RSVEGISRRLKR) is cleaved from the precursor. The tract at residues 58 to 69 (RIFLQNLIEGVN) is important for receptor binding. A disordered region spans residues 76–157 (TSEVSPNPKP…WLNSGMYGSN (82 aa)). 2 stretches are compositionally biased toward polar residues: residues 77 to 91 (SEVSPNPKPATNTKN) and 106 to 116 (TQETNKSQTYK). Positions 109 to 130 (TNKSQTYKEQPLKVSGKKKKAK) match the Nuclear localization signal motif. Basic residues predominate over residues 123–133 (SGKKKKAKPGK).

Belongs to the parathyroid hormone family.

It localises to the secreted. The protein localises to the cytoplasm. Its subcellular location is the nucleus. Functionally, neuroendocrine peptide which is a critical regulator of cellular and organ growth, development, migration, differentiation and survival and of epithelial calcium ion transport. Acts by binding to its receptor, PTH1R, activating G protein-coupled receptor signaling. Regulates endochondral bone development and epithelial-mesenchymal interactions during the formation of the mammary glands and teeth. Required for skeletal homeostasis. Potent inhibitor of osteoclastic bone resorption. The polypeptide is Parathyroid hormone-related protein (PTHLH) (Gallus gallus (Chicken)).